The chain runs to 1150 residues: Solute carrier family 12 member 6 (1150 aa).

A disordered region spans residues 1–108 (MHPPEATTKM…GEHSQLLDDG (108 aa)). The Cytoplasmic portion of the chain corresponds to 1–135 (MHPPEATTKM…DEYFDKNLAL (135 aa)). The span at 28 to 45 (LSDTSPDLSSRSSSRVRF) shows a compositional bias: low complexity. At Ser-32 the chain carries Phosphoserine. Positions 80–101 (DRTSNPQDVTEDPSQNSITGEH) are enriched in polar residues. The residue at position 120 (Ser-120) is a Phosphoserine. Residues 136–158 (FEEEMDTRPKVSSLLNRMANYTN) form a discontinuously helical membrane-spanning segment. K(+) contacts are provided by Ser-147 and Ser-148. Ser-148 bears the Phosphoserine mark. Asn-151 is a binding site for chloride. Over 159 to 165 (LTQGAKE) the chain is Extracellular. The disordered stretch occupies residues 161 to 181 (QGAKEHEEAENITEGKKKPTK). Positions 163-177 (AKEHEEAENITEGKK) are enriched in basic and acidic residues. Residues 166–188 (HEEAENITEGKKKPTKSPQMGTF) form a helical membrane-spanning segment. Residues 189 to 211 (MGVYLPCLQNIFGVILFLRLTWV) are Cytoplasmic-facing. The chain crosses the membrane as a helical span at residues 212–245 (VGTAGILQAFAIVLICCCCTMLTAISMSAIATNG). Residues 246–263 (VVPAGGSYFMISRALGPE) are Extracellular-facing. The next 2 membrane-spanning stretches (helical) occupy residues 264–287 (FGGAVGLCFYLGTTFAAAMYILGA) and 288–316 (IEIFLVYIVPRAAIFRSDDALKESAAMLN). Residue Tyr-283 coordinates K(+). Topologically, residues 317 to 433 (NMRVYGTAFL…FVHNNVISIQ (117 aa)) are extracellular. An intrachain disulfide couples Cys-375 to Cys-390. 4 N-linked (GlcNAc...) asparagine glycosylation sites follow: Asn-379, Asn-398, Asn-411, and Asn-417. Cys-410 and Cys-420 are disulfide-bonded. The helical transmembrane segment at 434–454 (GIPGLASGIITENLWSNYLPK) threads the bilayer. Residues Ile-443, Thr-444, and Asn-446 each contribute to the K(+) site. Chloride contacts are provided by Ile-443 and Thr-444. 2 residues coordinate chloride: Leu-447 and Trp-448. Over 455–464 (GEIIEKPSAK) the chain is Cytoplasmic. Residues 465-487 (SSDVLGNLNHEYVLADITTSFTL) traverse the membrane as a helical segment. Residues 488–518 (LVGIFFPSVTGIMAGSNRSGDLKDAQKSIPI) lie on the Extracellular side of the membrane. K(+) is bound at residue Thr-497. The helical transmembrane segment at 519–545 (GTILAILTTSFVYLSNVVLFGACIEGV) threads the bilayer. At 546-568 (VLRDKFGDAVKGNLVVGTLSWPS) the chain is on the cytoplasmic side. 2 consecutive transmembrane segments (helical) span residues 569–589 (PWVIVIGSFFSTCGAGLQSLT) and 590–612 (GAPRLLQAIAKDNIIPFLRVFGH). Ile-603 is a binding site for chloride. At 613–629 (SKANGEPTWALLLTAAI) the chain is on the cytoplasmic side. Helical transmembrane passes span 630–649 (AELGILIASLDLVAPILSMF) and 650–665 (FLMCYLFVNLACALQT). Residue Tyr-654 coordinates chloride. The Cytoplasmic portion of the chain corresponds to 666–1150 (LLRTPNWRPR…GGSEVITIYS (485 aa)). A scissor helix region spans residues 682–691 (ALSFMGMSIC). A Phosphoserine modification is found at Ser-736. Residue Thr-778 is modified to Phosphothreonine. The residue at position 981 (Ser-981) is a Phosphoserine. Thr-991 carries the post-translational modification Phosphothreonine. 3 positions are modified to phosphoserine: Ser-1023, Ser-1029, and Ser-1032. A Phosphothreonine modification is found at Thr-1048. A Phosphotyrosine modification is found at Tyr-1121.

The protein belongs to the SLC12A transporter family. K/Cl co-transporter subfamily. Homodimer; adopts a domain-swap conformation at the scissor helices connecting the transmembrane domain and C-terminal domain. Heterodimer with K-Cl cotransporter SLC12A5. Interacts (via C-terminus) with CKB; the interaction may be required for potassium-chloride cotransport activity. In terms of processing, phosphorylated, phosphorylation regulates transporter activity. Phosphorylated at Thr-991 and Thr-1048 by OXSR1/OSR1 and STK39/SPAK downstream of WNK kinases (WNK1, WNK2, WNK3 or WNK4), inhibiting the potassium-chloride cotransport activity. N-glycosylated. As to expression, expressed in hippocampus and corpus callosum (at protein level). Highly expressed throughout the brain and detected at lower levels in kidney. Highly expressed in highly myelinated white matter of the brain, but not in gray matter. Detected in the corpus callosum, in packed cell layers of the hippocampus and in Purkinje neurons within the cerebellum. Highly expressed in white matter in the spinal cord, but not in dorsal root ganglia or sciatic nerve. Colocalizes with the oligodendrocyte marker CNP. Expressed in hippocampus in CA1, and to a lesser extent CA3 pyramidal cells. Also expressed in cortex, mostly in large neurons and in the large cerebellar Purkinje cells. In terms of tissue distribution, highly expressed in kidney, but not detected in brain.

It localises to the cell membrane. The protein localises to the basolateral cell membrane. The enzyme catalyses K(+)(in) + chloride(in) = K(+)(out) + chloride(out). Its activity is regulated as follows. Inhibited following phosphorylation by OXSR1/OSR1 and STK39/SPAK: phosphorylation takes place downstream of WNK kinases (WNK1, WNK2, WNK3 or WNK4) in response to hyperosmotic stress and subsequent cell shrinkage. In terms of biological role, mediates electroneutral potassium-chloride cotransport when activated by cell swelling. May contribute to cell volume homeostasis in single cells. Mediates electroneutral potassium-chloride cotransport when activated by cell swelling. May contribute to cell volume homeostasis in single cells. The polypeptide is Solute carrier family 12 member 6 (Slc12a6) (Mus musculus (Mouse)).